A 248-amino-acid polypeptide reads, in one-letter code: Oligo(A)/oligo(T)-binding protein (248 aa).

A DNA-binding region spans residues 1–36 (MAKTLAQGRKPGSGRKPGKGKTLREGRKPGSGRRRR). 2 disordered regions span residues 1–127 (MAKT…LQQQ) and 219–248 (TAAS…NATI). A run of 3 repeats spans residues 8–12 (GRKPG), 14–18 (GRKPG), and 26–30 (GRKPG). Residues 8-30 (GRKPGSGRKPGKGKTLREGRKPG) are 3 X 5 AA repeats of G-R-K-P-G. Residues 12-21 (GSGRKPGKGK) are compositionally biased toward basic residues. Positions 37-71 (QDTGGKETDGSQQDQESRLISSRDMEAVDALRELT) are enriched in basic and acidic residues. Composition is skewed to low complexity over residues 72-100 (HSPS…LPPS) and 111-127 (QQQQ…LQQQ).

Binds as a dimer or higher oligomer.

Functionally, DNA-binding protein that recognizes oligo(A).oligo(T) tracts (A.T DNA). Can bind to any 11 bp sequence in which 10 bases conform to an uninterrupted oligo(A).oligo(T) tract. In Saccharomyces cerevisiae (strain ATCC 204508 / S288c) (Baker's yeast), this protein is Oligo(A)/oligo(T)-binding protein (DAT1).